The sequence spans 735 residues: Nuclear intron maturase 2, mitochondrial (735 aa).

The transit peptide at 1-12 directs the protein to the mitochondrion; that stretch reads MRRSFSVLGPYK. In terms of domain architecture, Reverse transcriptase spans 161-460; sequence RDKTDYESLS…KGIMFLDHVL (300 aa). An intron maturase type-2 region spans residues 485-653; that stretch reads GTLLSVTASL…KFLIEYLTLD (169 aa). Positions 707–735 are disordered; it reads SSTYNRDNDDQKNKEEDEDSEDGLRIARM. Over residues 712–721 the composition is skewed to basic and acidic residues; sequence RDNDDQKNKE.

Belongs to the plant nuclear intron maturase (nMat) family. Associated to a large ribonucleoprotein complex in mitochondria containing group-II intron RNAs.

It is found in the mitochondrion. Functionally, nuclear-encoded maturase required for splicing of group-II introns in mitochondria. Involved in the splicing of mitochondrial COX2, NAD1 and NAD7 transcripts. Necessary for mitochondrial biogenesis during early developmental stages. In Arabidopsis thaliana (Mouse-ear cress), this protein is Nuclear intron maturase 2, mitochondrial.